The chain runs to 551 residues: Xylulose kinase (551 aa).

Substrate contacts are provided by His-114, Arg-185, Asp-295, and Asn-296. Residues Trp-370, 456–457 (GA), and Asn-460 each bind ATP.

This sequence belongs to the FGGY kinase family. Monomer.

It carries out the reaction D-xylulose + ATP = D-xylulose 5-phosphate + ADP + H(+). Functionally, phosphorylates D-xylulose to produce D-xylulose 5-phosphate, a molecule that may play an important role in the regulation of glucose metabolism and lipogenesis. In Mus musculus (Mouse), this protein is Xylulose kinase (Xylb).